Consider the following 414-residue polypeptide: 3-oxoacyl-[acyl-carrier-protein] synthase 2 (414 aa).

The 408-residue stretch at 4–411 (NIRVVITGMG…GHNAVLVFKK (408 aa)) folds into the Ketosynthase family 3 (KS3) domain. Catalysis depends on for beta-ketoacyl synthase activity residues Cys-165, His-304, and His-341.

This sequence belongs to the thiolase-like superfamily. Beta-ketoacyl-ACP synthases family.

It carries out the reaction a fatty acyl-[ACP] + malonyl-[ACP] + H(+) = a 3-oxoacyl-[ACP] + holo-[ACP] + CO2. It catalyses the reaction (9Z)-hexadecenoyl-[ACP] + malonyl-[ACP] + H(+) = 3-oxo-(11Z)-octadecenoyl-[ACP] + holo-[ACP] + CO2. It functions in the pathway lipid metabolism; fatty acid biosynthesis. Involved in the type II fatty acid elongation cycle. Catalyzes the elongation of a wide range of acyl-ACP by the addition of two carbons from malonyl-ACP to an acyl acceptor. Can efficiently catalyze the conversion of palmitoleoyl-ACP (cis-hexadec-9-enoyl-ACP) to cis-vaccenoyl-ACP (cis-octadec-11-enoyl-ACP), an essential step in the thermal regulation of fatty acid composition. The polypeptide is 3-oxoacyl-[acyl-carrier-protein] synthase 2 (fabF) (Staphylococcus aureus (strain MRSA252)).